The sequence spans 582 residues: External alternative NADH-ubiquinone oxidoreductase, mitochondrial (582 aa).

A mitochondrion-targeting transit peptide spans 1-30; that stretch reads MLRLRPAVRAVSVARSVALTRSLHVSVAKF. A disordered region spans residues 46-65; it reads KQTAGHQGHHQEIPKPDENH. Residues 54–65 are compositionally biased toward basic and acidic residues; that stretch reads HHQEIPKPDENH. An FAD-binding site is contributed by 114–144; the sequence is TLVVLGSGWGSVSFLKKLDTSNYNVIVVSPR. 277-313 provides a ligand contact to NAD(+); it reads LHTVVVGGGPTGVEFAAELQDFFEDDLRKWIPDIRDD. Positions 454–501 form a coiled coil; the sequence is LLNGIAKTEDLNNEITNLEKQSEHTFDEQERKNIFAQLESKSRKLRRS.

Belongs to the NADH dehydrogenase family. FAD is required as a cofactor.

The protein localises to the mitochondrion inner membrane. The catalysed reaction is a quinone + NADH + H(+) = a quinol + NAD(+). The enzyme catalyses a ubiquinone + NADH + H(+) = a ubiquinol + NAD(+). Alternative NADH-ubiquinone oxidoreductase which catalyzes the oxidation of mitochondrial NADH does not translocate protons across the inner mitochondrial membrane. In Yarrowia lipolytica (strain CLIB 122 / E 150) (Yeast), this protein is External alternative NADH-ubiquinone oxidoreductase, mitochondrial (NDH2).